We begin with the raw amino-acid sequence, 113 residues long: Large ribosomal subunit protein bL17 (113 aa).

This sequence belongs to the bacterial ribosomal protein bL17 family. As to quaternary structure, part of the 50S ribosomal subunit. Contacts protein L32.

In Clostridium botulinum (strain Loch Maree / Type A3), this protein is Large ribosomal subunit protein bL17.